The sequence spans 167 residues: NAD(P)H-quinone oxidoreductase subunit I, chloroplastic (167 aa).

4Fe-4S ferredoxin-type domains are found at residues 55–84 (GRIH…VDWK) and 95–124 (LNYS…MTEE). 8 residues coordinate [4Fe-4S] cluster: Cys64, Cys67, Cys70, Cys74, Cys104, Cys107, Cys110, and Cys114.

The protein belongs to the complex I 23 kDa subunit family. As to quaternary structure, NDH is composed of at least 16 different subunits, 5 of which are encoded in the nucleus. [4Fe-4S] cluster is required as a cofactor.

The protein resides in the plastid. It localises to the chloroplast thylakoid membrane. It catalyses the reaction a plastoquinone + NADH + (n+1) H(+)(in) = a plastoquinol + NAD(+) + n H(+)(out). The catalysed reaction is a plastoquinone + NADPH + (n+1) H(+)(in) = a plastoquinol + NADP(+) + n H(+)(out). Its function is as follows. NDH shuttles electrons from NAD(P)H:plastoquinone, via FMN and iron-sulfur (Fe-S) centers, to quinones in the photosynthetic chain and possibly in a chloroplast respiratory chain. The immediate electron acceptor for the enzyme in this species is believed to be plastoquinone. Couples the redox reaction to proton translocation, and thus conserves the redox energy in a proton gradient. This Vitis vinifera (Grape) protein is NAD(P)H-quinone oxidoreductase subunit I, chloroplastic.